The primary structure comprises 313 residues: Malate dehydrogenase (313 aa).

NAD(+)-binding positions include 8–13 (GAGNVG) and D33. The substrate site is built by R83 and R89. NAD(+)-binding positions include N96 and 119-121 (ISN). Substrate contacts are provided by N121 and R152. The active-site Proton acceptor is H176.

It belongs to the LDH/MDH superfamily. MDH type 3 family.

The catalysed reaction is (S)-malate + NAD(+) = oxaloacetate + NADH + H(+). In terms of biological role, catalyzes the reversible oxidation of malate to oxaloacetate. The chain is Malate dehydrogenase from Bacteroides fragilis (strain ATCC 25285 / DSM 2151 / CCUG 4856 / JCM 11019 / LMG 10263 / NCTC 9343 / Onslow / VPI 2553 / EN-2).